Consider the following 123-residue polypeptide: Large ribosomal subunit protein uL14 (123 aa).

This sequence belongs to the universal ribosomal protein uL14 family. In terms of assembly, part of the 50S ribosomal subunit. Forms a cluster with proteins L3 and L19. In the 70S ribosome, L14 and L19 interact and together make contacts with the 16S rRNA in bridges B5 and B8.

In terms of biological role, binds to 23S rRNA. Forms part of two intersubunit bridges in the 70S ribosome. The sequence is that of Large ribosomal subunit protein uL14 from Blochmanniella pennsylvanica (strain BPEN).